The primary structure comprises 520 residues: Cholesterol side-chain cleavage enzyme, mitochondrial (520 aa).

Residues 1–36 (MLAKGLSLRSVLAKGCQPFLSPTWQSSVLATGGGAN) constitute a mitochondrion transit peptide. Cys-458 lines the heme pocket.

The protein belongs to the cytochrome P450 family. As to quaternary structure, interacts with FDX1/adrenodoxin. It depends on heme as a cofactor.

Its subcellular location is the mitochondrion inner membrane. It catalyses the reaction 6 reduced [adrenodoxin] + cholesterol + 3 O2 + 6 H(+) = 4-methylpentanal + pregnenolone + 6 oxidized [adrenodoxin] + 4 H2O. The enzyme catalyses 2 reduced [adrenodoxin] + cholesterol + O2 + 2 H(+) = (22R)-hydroxycholesterol + 2 oxidized [adrenodoxin] + H2O. It carries out the reaction (22R)-hydroxycholesterol + 2 reduced [adrenodoxin] + O2 + 2 H(+) = (20R,22R)-20,22-dihydroxycholesterol + 2 oxidized [adrenodoxin] + H2O. The catalysed reaction is (20R,22R)-20,22-dihydroxycholesterol + 2 reduced [adrenodoxin] + O2 + 2 H(+) = 4-methylpentanal + pregnenolone + 2 oxidized [adrenodoxin] + 2 H2O. It functions in the pathway lipid metabolism; C21-steroid hormone metabolism. Its pathway is steroid metabolism; cholesterol metabolism. In terms of biological role, a cytochrome P450 monooxygenase that catalyzes the side-chain hydroxylation and cleavage of cholesterol to pregnenolone, the precursor of most steroid hormones. Catalyzes three sequential oxidation reactions of cholesterol, namely the hydroxylation at C22 followed with the hydroxylation at C20 to yield 20R,22R-hydroxycholesterol that is further cleaved between C20 and C22 to yield the C21-steroid pregnenolone and 4-methylpentanal. Mechanistically, uses molecular oxygen inserting one oxygen atom into a substrate and reducing the second into a water molecule. Two electrons are provided by NADPH via a two-protein mitochondrial transfer system comprising flavoprotein FDXR (adrenodoxin/ferredoxin reductase) and nonheme iron-sulfur protein FDX1 or FDX2 (adrenodoxin/ferredoxin). The polypeptide is Cholesterol side-chain cleavage enzyme, mitochondrial (CYP11A1) (Mesocricetus auratus (Golden hamster)).